The primary structure comprises 143 residues: Transcriptional regulator MraZ (143 aa).

2 SpoVT-AbrB domains span residues 5–47 (QYEH…SLEE) and 76–119 (AVEC…SKEV).

Belongs to the MraZ family. In terms of assembly, forms oligomers.

Its subcellular location is the cytoplasm. It localises to the nucleoid. This Thermoanaerobacter pseudethanolicus (strain ATCC 33223 / 39E) (Clostridium thermohydrosulfuricum) protein is Transcriptional regulator MraZ.